A 399-amino-acid polypeptide reads, in one-letter code: MAKEKYNRTKPHVNIGTIGHVDHGKTTLTAAISAVLSRKGLAELKDYSNIDNAPEEKERGITIATSHIEYETEKRHYAHVDCPGHADYVKNMITGAAQMDGAILVIASTDGPMAQTREHILLARQVGVPYIVVFLNKTDMVDDPELIELVEEEVKDLLKEYGFPGDEIPIIKGSALKALEEAKAGGDGEWSAKIMELMDAVDSYIPTPKRDTDKDFLMPIEDIFSISGRGTVVTGRVEKGIVKVGDTVELVGIKPTQTTTVTGVEMFRKELDEGEAGDNVGVLLRGTAKEDVERGMVLAKPKSITPHTKFEAEVYILTKEEGGRHTPFFNNYRPQFYVRTTDVTGSIQLPEGTEMVMPGDNVKITVELIHPIALEQGTRFAIREGGHTVGSGVVSKILG.

A tr-type G domain is found at 10–209 (KPHVNIGTIG…AVDSYIPTPK (200 aa)). A G1 region spans residues 19 to 26 (GHVDHGKT). 19–26 (GHVDHGKT) contributes to the GTP binding site. Threonine 26 serves as a coordination point for Mg(2+). The G2 stretch occupies residues 60–64 (GITIA). Positions 81 to 84 (DCPG) are G3. GTP-binding positions include 81–85 (DCPGH) and 136–139 (NKTD). The interval 136-139 (NKTD) is G4. Residues 174 to 176 (SAL) are G5.

Belongs to the TRAFAC class translation factor GTPase superfamily. Classic translation factor GTPase family. EF-Tu/EF-1A subfamily. As to quaternary structure, monomer.

It localises to the cytoplasm. The catalysed reaction is GTP + H2O = GDP + phosphate + H(+). Functionally, GTP hydrolase that promotes the GTP-dependent binding of aminoacyl-tRNA to the A-site of ribosomes during protein biosynthesis. In Campylobacter hominis (strain ATCC BAA-381 / DSM 21671 / CCUG 45161 / LMG 19568 / NCTC 13146 / CH001A), this protein is Elongation factor Tu.